A 342-amino-acid polypeptide reads, in one-letter code: Ketol-acid reductoisomerase (NADP(+)) (342 aa).

The region spanning Ala-2–Thr-182 is the KARI N-terminal Rossmann domain. NADP(+) contacts are provided by residues Tyr-25–Gln-28, Lys-48, Ser-51, Ser-53, and Asp-83–Gln-86. His-108 is a catalytic residue. Gly-134 contacts NADP(+). The KARI C-terminal knotted domain occupies Thr-183–Asn-328. Mg(2+) is bound by residues Asp-191, Glu-195, Glu-227, and Glu-231. Ser-252 provides a ligand contact to substrate.

It belongs to the ketol-acid reductoisomerase family. Requires Mg(2+) as cofactor.

It catalyses the reaction (2R)-2,3-dihydroxy-3-methylbutanoate + NADP(+) = (2S)-2-acetolactate + NADPH + H(+). The enzyme catalyses (2R,3R)-2,3-dihydroxy-3-methylpentanoate + NADP(+) = (S)-2-ethyl-2-hydroxy-3-oxobutanoate + NADPH + H(+). The protein operates within amino-acid biosynthesis; L-isoleucine biosynthesis; L-isoleucine from 2-oxobutanoate: step 2/4. It participates in amino-acid biosynthesis; L-valine biosynthesis; L-valine from pyruvate: step 2/4. Functionally, involved in the biosynthesis of branched-chain amino acids (BCAA). Catalyzes an alkyl-migration followed by a ketol-acid reduction of (S)-2-acetolactate (S2AL) to yield (R)-2,3-dihydroxy-isovalerate. In the isomerase reaction, S2AL is rearranged via a Mg-dependent methyl migration to produce 3-hydroxy-3-methyl-2-ketobutyrate (HMKB). In the reductase reaction, this 2-ketoacid undergoes a metal-dependent reduction by NADPH to yield (R)-2,3-dihydroxy-isovalerate. This Leifsonia xyli subsp. xyli (strain CTCB07) protein is Ketol-acid reductoisomerase (NADP(+)).